Reading from the N-terminus, the 232-residue chain is 5'-methylthioadenosine/S-adenosylhomocysteine nucleosidase (232 aa).

Glutamate 12 acts as the Proton acceptor in catalysis. Substrate-binding positions include glycine 78, valine 152, and 173 to 174 (ME). Aspartate 197 functions as the Proton donor in the catalytic mechanism.

This sequence belongs to the PNP/UDP phosphorylase family. MtnN subfamily. Homodimer.

It catalyses the reaction S-adenosyl-L-homocysteine + H2O = S-(5-deoxy-D-ribos-5-yl)-L-homocysteine + adenine. It carries out the reaction S-methyl-5'-thioadenosine + H2O = 5-(methylsulfanyl)-D-ribose + adenine. The enzyme catalyses 5'-deoxyadenosine + H2O = 5-deoxy-D-ribose + adenine. The protein operates within amino-acid biosynthesis; L-methionine biosynthesis via salvage pathway; S-methyl-5-thio-alpha-D-ribose 1-phosphate from S-methyl-5'-thioadenosine (hydrolase route): step 1/2. In terms of biological role, catalyzes the irreversible cleavage of the glycosidic bond in both 5'-methylthioadenosine (MTA) and S-adenosylhomocysteine (SAH/AdoHcy) to adenine and the corresponding thioribose, 5'-methylthioribose and S-ribosylhomocysteine, respectively. Also cleaves 5'-deoxyadenosine, a toxic by-product of radical S-adenosylmethionine (SAM) enzymes, into 5-deoxyribose and adenine. Thus, is required for in vivo function of the radical SAM enzymes biotin synthase and lipoic acid synthase, that are inhibited by 5'-deoxyadenosine accumulation. The chain is 5'-methylthioadenosine/S-adenosylhomocysteine nucleosidase from Buchnera aphidicola subsp. Acyrthosiphon pisum (strain 5A).